The chain runs to 357 residues: MEENKQRVKSMINILQLVAPGTPLREGIDNVLRAQTGGLIVLGYNEQIKSIVDGGFHINCAFSPASLYELAKMDGALILNETGSKILIANAQLVPEASIDSIETGMRHRTAERVAKQTGSLVVAISQRRNVITLYQGNLRYTLKDIGVILTKANQAIQTLEKYKAVWNDGITNLGILEFEEVVTMSEVVHVLHSVEMVLRIKNEILSYIHELGTEGRLIRLQLTELLADLEAEAALLIKDYHQEKTQDHHQILKKLQDLANTQLLEDSDLVKLLGYPGQTSLEESVTPRGYRITSKISRVPPLIIENLINRFKTLQGVCRATIHELDDVEGIGEVRAKKIREGLKRIQEHLYMSRHN.

The 139-residue stretch at 8–146 (VKSMINILQL…GNLRYTLKDI (139 aa)) folds into the DAC domain. Residues Gly-75, Leu-93, and 106 to 110 (MRHRT) each bind ATP.

The protein belongs to the DisA family. Homooctamer. The cofactor is Mg(2+).

It catalyses the reaction 2 ATP = 3',3'-c-di-AMP + 2 diphosphate. Functionally, participates in a DNA-damage check-point that is active prior to asymmetric division when DNA is damaged. DisA forms globular foci that rapidly scan along the chromosomes during sporulation, searching for lesions. When a lesion is present, DisA pauses at the lesion site. This triggers a cellular response that culminates in a temporary block in sporulation initiation. In terms of biological role, also has diadenylate cyclase activity, catalyzing the condensation of 2 ATP molecules into cyclic di-AMP (c-di-AMP). c-di-AMP acts as a signaling molecule that couples DNA integrity with progression of sporulation. The rise in c-di-AMP level generated by DisA while scanning the chromosome, operates as a positive signal that advances sporulation; upon encountering a lesion, the DisA focus arrests at the damaged site and halts c-di-AMP synthesis. This chain is DNA integrity scanning protein DisA, found in Bacillus cereus (strain G9842).